Consider the following 281-residue polypeptide: MKYLEVTFTTHPCNETVNDVVSALAGEIGFESFVECEGGIQAYIQQTLFDEEALKEMVANFPLPDTRIEYTIKEAEDKNWNEEWEKNFFQPIVIGDRCCIHSTFHKDTPKTEYEILINPQMAFGTGHHETTSSIISELLEADLKGKSVLDMGCGTSILAILASMRGANPVTAIDIDDWCVNNSKDNIALNHIHNITVELGDANLLKGRKAFDVIIANINRNILLADLPHYAACMHPGSEIFMSGFYIQDIPFIREKAESLGMEFVHHREKNNWAAVKFIMK.

The S-adenosyl-L-methionine site is built by Thr-131, Gly-152, Asp-174, and Asn-217.

The protein belongs to the methyltransferase superfamily. PrmA family.

The protein resides in the cytoplasm. It carries out the reaction L-lysyl-[protein] + 3 S-adenosyl-L-methionine = N(6),N(6),N(6)-trimethyl-L-lysyl-[protein] + 3 S-adenosyl-L-homocysteine + 3 H(+). Methylates ribosomal protein L11. The chain is Ribosomal protein L11 methyltransferase from Phocaeicola vulgatus (strain ATCC 8482 / DSM 1447 / JCM 5826 / CCUG 4940 / NBRC 14291 / NCTC 11154) (Bacteroides vulgatus).